The primary structure comprises 391 residues: Ribosomal RNA small subunit methyltransferase H (391 aa).

The segment at 1–23 (MDVDVQDDVQGRAGEGAEERAHD) is disordered. S-adenosyl-L-methionine contacts are provided by residues 59–61 (GGH), Asp-78, Leu-112, Asp-126, and Gln-133. Residues 284 to 391 (SSSSAPPDLP…EPGATVERTP (108 aa)) are disordered. Positions 368–380 (RTQEFETHPHLEP) are enriched in basic and acidic residues.

Belongs to the methyltransferase superfamily. RsmH family.

The protein localises to the cytoplasm. It catalyses the reaction cytidine(1402) in 16S rRNA + S-adenosyl-L-methionine = N(4)-methylcytidine(1402) in 16S rRNA + S-adenosyl-L-homocysteine + H(+). Functionally, specifically methylates the N4 position of cytidine in position 1402 (C1402) of 16S rRNA. The sequence is that of Ribosomal RNA small subunit methyltransferase H from Kineococcus radiotolerans (strain ATCC BAA-149 / DSM 14245 / SRS30216).